Reading from the N-terminus, the 399-residue chain is Phosphoglycerate kinase (399 aa).

Substrate is bound by residues 22–24 (DFN), Arg38, 61–64 (HLGR), Arg120, and Arg153. Residues Lys204, Glu326, and 352–355 (GGDT) contribute to the ATP site.

It belongs to the phosphoglycerate kinase family. As to quaternary structure, monomer.

The protein localises to the cytoplasm. It catalyses the reaction (2R)-3-phosphoglycerate + ATP = (2R)-3-phospho-glyceroyl phosphate + ADP. Its pathway is carbohydrate degradation; glycolysis; pyruvate from D-glyceraldehyde 3-phosphate: step 2/5. This Citrifermentans bemidjiense (strain ATCC BAA-1014 / DSM 16622 / JCM 12645 / Bem) (Geobacter bemidjiensis) protein is Phosphoglycerate kinase.